Consider the following 50-residue polypeptide: FLGTINLSLCEQERDADEEERRDEPDGSNVEVEKRFLSHIAGFLSNLFGK.

A signal peptide spans 1–10 (FLGTINLSLC). The propeptide occupies 11-35 (EQERDADEEERRDEPDGSNVEVEKR). Phenylalanine 48 carries the post-translational modification Phenylalanine amide.

As to expression, expressed by the skin glands.

Its subcellular location is the secreted. The protein localises to the target cell membrane. Functionally, amphipathic alpha-helical antimicrobial peptide with potent activity against some Gram-positive bacteria (MIC=4-&gt;80 uM), potent activity against fungi (MIC=10-20 uM), and no activity against Gram-negative bacteria. Does not display anti-leishmania activity. Does not show hemolytic activity (LC(50)&gt;80 uM). The sequence is that of Temporin-SHc from Pelophylax saharicus (Sahara frog).